The sequence spans 301 residues: Glycine--tRNA ligase alpha subunit (301 aa).

This sequence belongs to the class-II aminoacyl-tRNA synthetase family. As to quaternary structure, tetramer of two alpha and two beta subunits.

The protein localises to the cytoplasm. The enzyme catalyses tRNA(Gly) + glycine + ATP = glycyl-tRNA(Gly) + AMP + diphosphate. The polypeptide is Glycine--tRNA ligase alpha subunit (Bordetella avium (strain 197N)).